A 282-amino-acid chain; its full sequence is MRIDTVNVLLEALPYIKEFYGKTFVIKFGGSAMKQENAKKAFIQDIILLKYTGIKPIIVHGGGPAISQMMKDLGIEPVFKNGHRVTDEKTMEIVEMVLVGKINKEIVMNLNLHGGRAVGICGKDSKLIVAEKETKHGDIGYVGKVKKVNPEILHALIENDYIPVIAPVGIGEDGHSYNINADTAAAEIAKSLMAEKLILLTDVDGVLKGDKLISTLTPDEAEDLIRDGTVTGGMIPKVECAVSAVRGGVGAVHIINGGLEHAILLEIFSRKGIGTMIKELEG.

Substrate-binding positions include 62-63 (GG), R84, and N178.

Belongs to the acetylglutamate kinase family. ArgB subfamily.

It is found in the cytoplasm. The enzyme catalyses N-acetyl-L-glutamate + ATP = N-acetyl-L-glutamyl 5-phosphate + ADP. It participates in amino-acid biosynthesis; L-arginine biosynthesis; N(2)-acetyl-L-ornithine from L-glutamate: step 2/4. In terms of biological role, catalyzes the ATP-dependent phosphorylation of N-acetyl-L-glutamate. In Thermotoga petrophila (strain ATCC BAA-488 / DSM 13995 / JCM 10881 / RKU-1), this protein is Acetylglutamate kinase.